The primary structure comprises 180 residues: Pro-glucagon (180 aa).

Residues 1 to 20 form the signal peptide; the sequence is MKSLYFVAGLFVMLVQGSWQ. Residues 25-35 are compositionally biased toward polar residues; it reads NTEEKSSSFPA. The interval 25 to 59 is disordered; that stretch reads NTEEKSSSFPAPQTDPLGDPDQINEDKRHSQGTFT. S54 is subject to Phosphoserine. Residues 84-89 constitute a propeptide that is removed on maturation; sequence NKNNIA. A phosphoserine mark is found at S105 and S108. At R127 the chain carries Arginine amide. Positions 131 to 145 are excised as a propeptide; it reads DFPEEVNIVEELRRR. Phosphoserine is present on residues S150 and S152.

The protein belongs to the glucagon family. In terms of processing, proglucagon is post-translationally processed in a tissue-specific manner in pancreatic A cells and intestinal L cells. In pancreatic A cells, the major bioactive hormone is glucagon cleaved by PCSK2/PC2. In the intestinal L cells PCSK1/PC1 liberates GLP-1, GLP-2, glicentin and oxyntomodulin. GLP-1 is further N-terminally truncated by post-translational processing in the intestinal L cells resulting in GLP-1(7-37) GLP-1-(7-36)amide. The C-terminal amidation is neither important for the metabolism of GLP-1 nor for its effects on the endocrine pancreas. In terms of tissue distribution, glucagon is secreted in the A cells of the islets of Langerhans. GLP-1, GLP-2, oxyntomodulin and glicentin are secreted from enteroendocrine cells throughout the gastrointestinal tract.

The protein localises to the secreted. Plays a key role in glucose metabolism and homeostasis. Regulates blood glucose by increasing gluconeogenesis and decreasing glycolysis. A counterregulatory hormone of insulin, raises plasma glucose levels in response to insulin-induced hypoglycemia. Plays an important role in initiating and maintaining hyperglycemic conditions in diabetes. Functionally, potent stimulator of glucose-dependent insulin release. Also stimulates insulin release in response to IL6. Plays important roles on gastric motility and the suppression of plasma glucagon levels. May be involved in the suppression of satiety and stimulation of glucose disposal in peripheral tissues, independent of the actions of insulin. Has growth-promoting activities on intestinal epithelium. May also regulate the hypothalamic pituitary axis (HPA) via effects on LH, TSH, CRH, oxytocin, and vasopressin secretion. Increases islet mass through stimulation of islet neogenesis and pancreatic beta cell proliferation. Inhibits beta cell apoptosis. In terms of biological role, stimulates intestinal growth and up-regulates villus height in the small intestine, concomitant with increased crypt cell proliferation and decreased enterocyte apoptosis. The gastrointestinal tract, from the stomach to the colon is the principal target for GLP-2 action. Plays a key role in nutrient homeostasis, enhancing nutrient assimilation through enhanced gastrointestinal function, as well as increasing nutrient disposal. Stimulates intestinal glucose transport and decreases mucosal permeability. Its function is as follows. Significantly reduces food intake. Inhibits gastric emptying in humans. Suppression of gastric emptying may lead to increased gastric distension, which may contribute to satiety by causing a sensation of fullness. May modulate gastric acid secretion and the gastro-pyloro-duodenal activity. May play an important role in intestinal mucosal growth in the early period of life. The sequence is that of Pro-glucagon (GCG) from Bos taurus (Bovine).